Here is a 4001-residue protein sequence, read N- to C-terminus: Ankyrin repeat and KH domain-containing protein mask (4001 aa).

Basic and acidic residues predominate over residues 1 to 14 (MNNDAKNHESDDLN). Disordered stretches follow at residues 1 to 61 (MNND…NRQL), 91 to 174 (KNEP…GGGS), and 391 to 494 (DTDT…FLLD). The span at 15–30 (VRSTAYFNQQTTTNQP) shows a compositional bias: polar residues. Low complexity predominate over residues 38 to 61 (NNTGSGSGSNNNNNNTNQNPNRQL). A compositionally biased stretch (polar residues) spans 94-117 (PLTTTESSGVLTNTPLPSNSRLKV). Positions 118–159 (NNNNNTNNTAKMSGTSSSQSSATPTPPTASSSTTTTTTTNIS) are enriched in low complexity. Residues 160–174 (TGGGGSGSSGGGGGS) are compositionally biased toward gly residues. Composition is skewed to acidic residues over residues 408–425 (SESEEESVSEDDIPESDP) and 434–486 (VRED…EDAP). S501 carries the phosphoserine modification. 15 ANK repeats span residues 546 to 575 (SGFSRSLVAACTDNDVNTVKRLLCKGNVNL), 584 to 614 (DGESLLSMACSAGYYELAQVLLAMSAAQVED), 618 to 647 (KDSTPLMEAASAGHLDIVKLLLNHNADVNA), 651 to 680 (TGNTPLMFACAGGQVDVVKVLLKHGANVEE), 684 to 713 (NGHTPLMEAASAGHVEVAKVLLEHGAGINT), 718 to 747 (FKESALTLACYKGHLDMVRFLLQAGADQEH), 751 to 780 (EMHTALMEASMDGHVEVARLLLDSGAQVNM), 784 to 813 (SFESPLTLAACGGHVELATLLIERGANIEE), 817 to 846 (EGYTPLMEAAREGHEEMVALLLSKGANINA), 851 to 880 (TQETALTLACCGGFMEVAAFLIKEGANLEL), 881 to 910 (GASTPLMEASQEGHTDLVSFLLKKKANVHA), 914 to 943 (TGDTALTHACENGHTDAAGVLLSYGAELEH), 947 to 976 (GGRTPLMKACRAGHLCTVKFLIQKGANVNK), 981 to 1011 (NDHTALSLACAGGHQSVVELLLKNNADPFHK), and 1014 to 1043 (DNSTMLIEASKGGHTRVVELLFRYPNISPT). Disordered stretches follow at residues 1046-1067 (AASANVTQAAPTSNQPGPNQMR) and 1306-1376 (QPGE…PTAL). Positions 1367–1376 (DNNQPVPTAL) are enriched in polar residues. A phosphoserine mark is found at S1389 and S1588. Disordered regions lie at residues 1583–1612 (GDQPKSPTETPPEMEETTMSSPTEADRLGS), 1646–1669 (SDLESECEDDAEGGAGADCEENTL), 1682–1779 (EDGI…SLPL), 1852–1872 (VVHQKQQHGEGDQQCEDDGSA), 2084–2108 (MAQHQAQQQQGVGEPLTEQQQQQLH), and 2225–2256 (TPAPSSGVSSTKSMPGGIAKKAIDKQSRKERR). Acidic residues-rich tracts occupy residues 1646 to 1657 (SDLESECEDDAE), 1685 to 1704 (IIVEEEEDDEEEDDDDEEQD), and 1716 to 1759 (DDED…EPDS). Low complexity predominate over residues 1760–1776 (DQGTGNNNNNSKSGASS). The segment covering 2084–2093 (MAQHQAQQQQ) has biased composition (low complexity). A compositionally biased stretch (polar residues) spans 2228-2237 (PSSGVSSTKS). ANK repeat units lie at residues 2312 to 2341 (NHDTALTLACAGGHEELVELLINRGANIEH), 2345 to 2374 (KGFTPLILAATAGHDKVVDILLKHSAELEA), 2379 to 2408 (TKDTPLSLACSGGRYEVVELLLSVGANKEH), 2412 to 2441 (SDYTPLSLAASGGYVNIIKLLLSHGAEINS), 2447 to 2476 (LGISPLMLAAMNGHTPAVKLLLDQGSDINA), 2481 to 2510 (NRNTALTLACFQGRHEVVSLLLDRRANVEH), 2514 to 2543 (TGLTPLMEAASGGYIEVGRVLLDKGADVNA), 2549 to 2578 (SRDTALTIAADKGHQKFVELLLSRNASVEV), 2582 to 2611 (KGNSPLWLAAHGGHLSVVELLYDHNADIDS), and 2615 to 2644 (RRVSCLMAAFRKGHTKIVKWMVQYVSQFPS). Residues 2674-2732 (AKEAQAVKANKNASILLEELDLERTREESRKAAAARRRERKKKKKMEKKEEKRRQQQGN) adopt a coiled-coil conformation. S2687 bears the Phosphoserine mark. The residue at position 2698 (T2698) is a Phosphothreonine. The interval 2699 to 3033 (REESRKAAAA…TSTTTAASSV (335 aa)) is disordered. Positions 2706 to 2719 (AAARRRERKKKKKM) are enriched in basic residues. The span at 2739-2762 (MQGDDDDASDKDDDSDKDDEDEEA) shows a compositional bias: acidic residues. Phosphoserine is present on residues S2747 and S2753. The span at 2793-2810 (SQSAQAAEAAANSVSTNS) shows a compositional bias: low complexity. The span at 2828–2839 (EPTQPVITSNSV) shows a compositional bias: polar residues. A compositionally biased stretch (basic and acidic residues) spans 2868-2886 (RQLDVKKEEPALKKKEEKN). A compositionally biased stretch (low complexity) spans 2906–2941 (ALPAKQQPSSSSKLQSSESASNINSSTATNTSSANT). Residues 2950–2960 (ASQTASATTLN) show a composition bias toward polar residues. Over residues 2963–2975 (KRTEVDGWKEVVR) the composition is skewed to basic and acidic residues. The span at 2995-3004 (TATSSATSVQ) shows a compositional bias: polar residues. Positions 3012–3032 (ANSSSNSSSSLTTSTTTAASS) are enriched in low complexity. One can recognise a KH domain in the interval 3036–3100 (MTCKKVQVPV…DATKQAHMLI (65 aa)). Composition is skewed to low complexity over residues 3156-3178 (ASTTSTSSSSSASSTTPAGASYS), 3195-3227 (SGRSSTSVKSNGSSTKVSASSGSGSRSGRAGSS), and 3244-3257 (NGVIKSKSESSSKS). 4 disordered regions span residues 3156–3329 (ASTT…GQGG), 3383–3457 (KPIA…QTSQ), 3520–3636 (AVGD…PPTA), and 3744–3786 (IFPQ…GGAA). The span at 3262–3278 (QKSSTTLGKSSTVSPGA) shows a compositional bias: polar residues. The span at 3396-3416 (GSPTQVQQQHQTQQQQQQQLP) shows a compositional bias: low complexity. The segment covering 3417-3427 (QPAPVPGPQPQ) has biased composition (pro residues). Residues 3428–3457 (QQPLQQQQQQQAPQQQPQQPNQQQQPQTSQ) show a composition bias toward low complexity. Positions 3539–3559 (NILSSPVGSSKASSNHSTSPP) are enriched in polar residues. The span at 3565-3577 (QQQQQQQPQSSQQ) shows a compositional bias: low complexity. S3596 is subject to Phosphoserine. Residues 3774 to 3786 (PPGTGARQPGGAA) are compositionally biased toward low complexity. S3820, S3822, and S3825 each carry phosphoserine. The tract at residues 3876 to 3945 (KAQPPGLQQP…HNMQAPPNMS (70 aa)) is disordered. Positions 3891-3910 (SQQQQQQPLNWLKQQPQQQQ) are enriched in low complexity.

May interact with Unc-89 (via protein kinase domain 1 or 2). As to expression, expressed ubiquitously in eye imaginal disk, slightly higher expression is seen in presumptive photoreceptors. Expressed in indirect flight muscle (IFM) (at protein level).

The protein resides in the cytoplasm. The protein localises to the myofibril. It localises to the sarcomere. It is found in the z line. Its subcellular location is the m line. Mediator of receptor tyrosine kinase (RTK) signaling, and may act either downstream of MAPK or transduce signaling through a parallel branch of the RTK pathway. Required for the development and organization of indirect flight muscle sarcomeres by regulating the formation of M line and H zone and the correct assembly of thick and thin filaments in the sarcomere. The chain is Ankyrin repeat and KH domain-containing protein mask from Drosophila melanogaster (Fruit fly).